We begin with the raw amino-acid sequence, 225 residues long: Ribose-5-phosphate isomerase A (225 aa).

Residues 26 to 29 (TGST), 82 to 85 (DGAD), and 95 to 98 (KGGG) each bind substrate. E104 acts as the Proton acceptor in catalysis. A substrate-binding site is contributed by K122.

This sequence belongs to the ribose 5-phosphate isomerase family. In terms of assembly, homodimer.

It catalyses the reaction aldehydo-D-ribose 5-phosphate = D-ribulose 5-phosphate. The protein operates within carbohydrate degradation; pentose phosphate pathway; D-ribose 5-phosphate from D-ribulose 5-phosphate (non-oxidative stage): step 1/1. Catalyzes the reversible conversion of ribose-5-phosphate to ribulose 5-phosphate. This is Ribose-5-phosphate isomerase A from Streptococcus gordonii (strain Challis / ATCC 35105 / BCRC 15272 / CH1 / DL1 / V288).